A 423-amino-acid chain; its full sequence is Probable histone-binding protein rbbD (423 aa).

WD repeat units follow at residues 119–159, 172–212, 222–262, 266–306, 310–350, and 367–407; these read NHEG…LEPT, GHKK…KSDS, GHTS…KPIH, AHNS…NRLH, SHTD…EEQN, and GHTS…YNDR.

This sequence belongs to the WD repeat RBAP46/RBAP48/MSI1 family. In terms of assembly, probably binds directly to helix 1 of the histone fold of histone H4, a region that is not accessible when H4 is in chromatin.

Its subcellular location is the nucleus. Its function is as follows. Core histone-binding subunit that may target chromatin assembly factors, chromatin remodeling factors and histone deacetylases to their histone substrates in a manner that is regulated by nucleosomal DNA. Component of several complexes which regulate chromatin metabolism. The sequence is that of Probable histone-binding protein rbbD (rbbD) from Dictyostelium discoideum (Social amoeba).